A 388-amino-acid polypeptide reads, in one-letter code: Isocitrate dehydrogenase [NAD] subunit 1, mitochondrial (388 aa).

A mitochondrion-targeting transit peptide spans 1-35 (MFSLRTAQPAQSLFRAATNTYSTSLPRSAIAARSF). Arg137, Arg168, and Asp255 together coordinate substrate. Asp255 serves as a coordination point for Mg(2+).

Belongs to the isocitrate and isopropylmalate dehydrogenases family. In terms of assembly, octamer of two non-identical subunits IDH1 and IDH2. Mg(2+) is required as a cofactor. Mn(2+) serves as cofactor.

It localises to the mitochondrion. It catalyses the reaction D-threo-isocitrate + NAD(+) = 2-oxoglutarate + CO2 + NADH. In terms of biological role, performs an essential role in the oxidative function of the citric acid cycle. This is Isocitrate dehydrogenase [NAD] subunit 1, mitochondrial (IDH1) from Ajellomyces capsulatus (Darling's disease fungus).